A 352-amino-acid polypeptide reads, in one-letter code: PDZ and LIM domain protein 2 (352 aa).

The PDZ domain occupies 1–84; sequence MALTVDVAGP…PLRLQLDRSQ (84 aa). 2 disordered regions span residues 67–97 and 111–149; these read SKIRQSPSPLRLQLDRSQATSPGQTNGDSSL and YTESQSSLRSSYSSPTSLSPRAGSPFSPPPSSSSLTGEA. Over residues 81-95 the composition is skewed to polar residues; sequence DRSQATSPGQTNGDS. Residues 111–135 show a composition bias toward low complexity; sequence YTESQSSLRSSYSSPTSLSPRAGSP. At Ser-124 the chain carries Phosphoserine. Position 126 is a phosphothreonine (Thr-126). Phosphoserine is present on residues Ser-127, Ser-129, Ser-134, Ser-137, Ser-143, Ser-161, Ser-197, Ser-203, Ser-213, and Ser-266. Residues 170–213 form a disordered region; it reads LSYSGRPGSRQAGLGRAGDSAVLVLPPSPGPRSSRPSMDSEGGS. The LIM zinc-binding domain occupies 284 to 344; sequence HTCEKCSTSI…EKHARQRYSA (61 aa).

As to quaternary structure, interacts with alpha-actinins ACTN1 and ACTN4, FLNA and MYH9. Interacts (via LIM zinc-binding domain) with MKRN2.

Its subcellular location is the cytoplasm. The protein resides in the nucleus. The protein localises to the cytoskeleton. Functionally, probable adapter protein located at the actin cytoskeleton that promotes cell attachment. Necessary for the migratory capacity of epithelial cells. Overexpression enhances cell adhesion to collagen and fibronectin and suppresses anchorage independent growth. May contribute to tumor cell migratory capacity. The polypeptide is PDZ and LIM domain protein 2 (PDLIM2) (Homo sapiens (Human)).